The sequence spans 324 residues: Adenine deaminase (324 aa).

Residues H11, H13, and H189 each coordinate Zn(2+). The Proton donor role is filled by E192. D270 provides a ligand contact to Zn(2+). D271 contacts substrate.

This sequence belongs to the metallo-dependent hydrolases superfamily. Adenosine and AMP deaminases family. Adenine deaminase type 2 subfamily. Requires Zn(2+) as cofactor.

The enzyme catalyses adenine + H2O + H(+) = hypoxanthine + NH4(+). Functionally, catalyzes the hydrolytic deamination of adenine to hypoxanthine. Plays an important role in the purine salvage pathway and in nitrogen catabolism. This Sinorhizobium medicae (strain WSM419) (Ensifer medicae) protein is Adenine deaminase.